The primary structure comprises 445 residues: Proline--tRNA ligase (445 aa).

This sequence belongs to the class-II aminoacyl-tRNA synthetase family. ProS type 2 subfamily. As to quaternary structure, homodimer.

The protein resides in the cytoplasm. It carries out the reaction tRNA(Pro) + L-proline + ATP = L-prolyl-tRNA(Pro) + AMP + diphosphate. Its function is as follows. Catalyzes the attachment of proline to tRNA(Pro) in a two-step reaction: proline is first activated by ATP to form Pro-AMP and then transferred to the acceptor end of tRNA(Pro). The chain is Proline--tRNA ligase from Cereibacter sphaeroides (strain ATCC 17023 / DSM 158 / JCM 6121 / CCUG 31486 / LMG 2827 / NBRC 12203 / NCIMB 8253 / ATH 2.4.1.) (Rhodobacter sphaeroides).